The primary structure comprises 376 residues: uncharacterized protein (376 aa).

This sequence belongs to the glycosyltransferase 28 family.

This is an uncharacterized protein from Methanosarcina mazei (strain ATCC BAA-159 / DSM 3647 / Goe1 / Go1 / JCM 11833 / OCM 88) (Methanosarcina frisia).